Reading from the N-terminus, the 418-residue chain is 26S proteasome regulatory subunit 6B (418 aa).

N-acetylmethionine is present on methionine 1. A Phosphoserine modification is found at serine 21. Position 25 is a phosphothreonine (threonine 25). Serine 28 carries the post-translational modification Phosphoserine. 206-213 contributes to the ATP binding site; it reads GPPGCGKT. Lysine 397 and lysine 401 each carry N6-acetyllysine.

Belongs to the AAA ATPase family. As to quaternary structure, component of the 19S proteasome regulatory particle complex. The 26S proteasome consists of a 20S core particle (CP) and two 19S regulatory subunits (RP). The regulatory particle is made of a lid composed of 9 subunits, a base containing 6 ATPases including PSMC4 and few additional components. Interacts with NR1I3. Interacts with PAAF1. Interacts with TRIM5. Interacts with ZFAND1.

Its subcellular location is the cytoplasm. The protein localises to the nucleus. In terms of biological role, component of the 26S proteasome, a multiprotein complex involved in the ATP-dependent degradation of ubiquitinated proteins. This complex plays a key role in the maintenance of protein homeostasis by removing misfolded or damaged proteins, which could impair cellular functions, and by removing proteins whose functions are no longer required. Therefore, the proteasome participates in numerous cellular processes, including cell cycle progression, apoptosis, or DNA damage repair. PSMC4 belongs to the heterohexameric ring of AAA (ATPases associated with diverse cellular activities) proteins that unfolds ubiquitinated target proteins that are concurrently translocated into a proteolytic chamber and degraded into peptides. This Bos taurus (Bovine) protein is 26S proteasome regulatory subunit 6B (PSMC4).